We begin with the raw amino-acid sequence, 432 residues long: Adenylosuccinate synthetase (432 aa).

GTP-binding positions include 13 to 19 (GDEGKGK) and 41 to 43 (GHT). Catalysis depends on Asp14, which acts as the Proton acceptor. Mg(2+) is bound by residues Asp14 and Gly41. IMP contacts are provided by residues 14–17 (DEGK), 39–42 (NAGH), Thr130, Arg144, Gln225, Thr240, and Arg304. Residue His42 is the Proton donor of the active site. Residue 300-306 (AVTGRPR) coordinates substrate. Residues Arg306, 332–334 (KLD), and 415–417 (STG) each bind GTP.

The protein belongs to the adenylosuccinate synthetase family. Homodimer. Mg(2+) is required as a cofactor.

Its subcellular location is the cytoplasm. It carries out the reaction IMP + L-aspartate + GTP = N(6)-(1,2-dicarboxyethyl)-AMP + GDP + phosphate + 2 H(+). It functions in the pathway purine metabolism; AMP biosynthesis via de novo pathway; AMP from IMP: step 1/2. Its function is as follows. Plays an important role in the de novo pathway of purine nucleotide biosynthesis. Catalyzes the first committed step in the biosynthesis of AMP from IMP. The chain is Adenylosuccinate synthetase from Haemophilus influenzae (strain ATCC 51907 / DSM 11121 / KW20 / Rd).